Reading from the N-terminus, the 159-residue chain is Transcriptional repressor NrdR (159 aa).

A zinc finger spans residues 3-34; the sequence is CPFCRHEDTQVVDSRVSEDGAAIRRRRRCSAC. In terms of domain architecture, ATP-cone spans 49-139; the sequence is PAVVKKDGSR…VYRRFEDVSE (91 aa).

It belongs to the NrdR family. The cofactor is Zn(2+).

Negatively regulates transcription of bacterial ribonucleotide reductase nrd genes and operons by binding to NrdR-boxes. The sequence is that of Transcriptional repressor NrdR from Burkholderia vietnamiensis (strain G4 / LMG 22486) (Burkholderia cepacia (strain R1808)).